Consider the following 316-residue polypeptide: Ribose-phosphate pyrophosphokinase (316 aa).

Residues 37–39 and 96–97 each bind ATP; these read DGE and RQ. Mg(2+) is bound by residues histidine 130 and aspartate 171. Lysine 194 is an active-site residue. D-ribose 5-phosphate-binding residues include arginine 196 and aspartate 221.

It belongs to the ribose-phosphate pyrophosphokinase family. Class I subfamily. Homohexamer. Requires Mg(2+) as cofactor.

The protein resides in the cytoplasm. It carries out the reaction D-ribose 5-phosphate + ATP = 5-phospho-alpha-D-ribose 1-diphosphate + AMP + H(+). It participates in metabolic intermediate biosynthesis; 5-phospho-alpha-D-ribose 1-diphosphate biosynthesis; 5-phospho-alpha-D-ribose 1-diphosphate from D-ribose 5-phosphate (route I): step 1/1. Involved in the biosynthesis of the central metabolite phospho-alpha-D-ribosyl-1-pyrophosphate (PRPP) via the transfer of pyrophosphoryl group from ATP to 1-hydroxyl of ribose-5-phosphate (Rib-5-P). The chain is Ribose-phosphate pyrophosphokinase from Rhodopirellula baltica (strain DSM 10527 / NCIMB 13988 / SH1).